The following is a 1090-amino-acid chain: Protein transport protein Sec24A (1090 aa).

Disordered stretches follow at residues 1-260 and 272-325; these read MAQP…AHNT and TPQL…TQTP. Positions 8–28 are enriched in low complexity; it reads AARGAAASLQAQNGAASASGS. Composition is skewed to polar residues over residues 29–55, 138–151, and 162–184; these read PYTNGPVHNTLMSPQVSSSQGYDSQPP, WQYNYPSTGPQTNH, and GNPNLTADHQYVSSGDPALQTSF. A compositionally biased stretch (pro residues) spans 194-236; that stretch reads QNPPLPPTFQPGAPPGPPPAGGPPPSRGPAPQKTPPRAAPPPS. 3 stretches are compositionally biased toward polar residues: residues 237 to 258, 274 to 286, and 313 to 325; these read FNSAVNQEGITSNANNGSTAAH, QLVNQNPKTSRSV, and SYPSGPQAFTQTP. Residues C428, C431, C449, and C452 each contribute to the Zn(2+) site. Positions 428-452 are zinc finger-like; sequence CRSCRTYINPFVNFLDQRRWKCNLC. A Gelsolin-like repeat occupies 963–1036; that stretch reads PQPPILQLSV…PESARIAAFI (74 aa).

This sequence belongs to the SEC23/SEC24 family. SEC24 subfamily. COPII is composed of at least five proteins: the Sec23/24 complex, the Sec13/31 complex and Sar1. Interacts with TMED2. Interacts (as part of the Sec23/24 complex) with SEC22B; recruits SEC22B into COPII-coated vesicles for its transport from the endoplasmic reticulum to the Golgi. Interacts with STING1; promoting STING1 translocation to COPII vesicles in a STEEP1-dependent manner. Interacts with TMEM39A. Interacts with SACM1L; this interaction is reduced in the absence of TMEM39A. Interacts with kinase FAM20C; transport of FAM20C from the endoplasmic reticulum to the Golgi is likely to be mediated by COPII vesicles.

Its subcellular location is the cytoplasmic vesicle. The protein resides in the COPII-coated vesicle membrane. The protein localises to the endoplasmic reticulum membrane. It is found in the cytoplasm. It localises to the cytosol. In terms of biological role, component of the coat protein complex II (COPII) which promotes the formation of transport vesicles from the endoplasmic reticulum (ER). The coat has two main functions, the physical deformation of the endoplasmic reticulum membrane into vesicles and the selection of cargo molecules for their transport to the Golgi complex. Plays a central role in cargo selection within the COPII complex and together with SEC24B may have a different specificity compared to SEC24C and SEC24D. May package preferentially cargos with cytoplasmic DxE or LxxLE motifs and may also recognize conformational epitopes. The sequence is that of Protein transport protein Sec24A from Mus musculus (Mouse).